The following is a 328-amino-acid chain: Beta-ribofuranosylphenol 5'-phosphate synthase (328 aa).

This sequence belongs to the beta-RFA-P synthase family. As to quaternary structure, homodimer. Mg(2+) is required as a cofactor.

The enzyme catalyses 5-phospho-alpha-D-ribose 1-diphosphate + 4-hydroxybenzoate + H(+) = 4-(beta-D-ribofuranosyl)phenol 5'-phosphate + CO2 + diphosphate. It carries out the reaction 4-aminobenzoate + 5-phospho-alpha-D-ribose 1-diphosphate + H(+) = 4-(beta-D-ribofuranosyl)aminobenzene 5'-phosphate + CO2 + diphosphate. It functions in the pathway cofactor biosynthesis; 5,6,7,8-tetrahydromethanopterin biosynthesis. Functionally, catalyzes the condensation of 4-hydroxybenzoate (HB) with 5-phospho-alpha-D-ribose 1-diphosphate (PRPP) to produce beta-ribofuranosylphenol 5'-phosphate (beta-RFH-P). Also catalyzes the condensation of 4-aminobenzoate (pABA) with PRPP to produce beta-ribofuranosylaminobenzene 5'-phosphate (beta-RFA-P). Only 4-hydroxybenzoate is known to be biosynthesized by methanogenic archaea, but 4-aminobenzoate can be used as substrate by growing methanogens when it is present in the growth medium. The protein is Beta-ribofuranosylphenol 5'-phosphate synthase of Methanocaldococcus jannaschii (strain ATCC 43067 / DSM 2661 / JAL-1 / JCM 10045 / NBRC 100440) (Methanococcus jannaschii).